The chain runs to 491 residues: Delayed-rectifier potassium channel regulatory subunit KCNS3 (491 aa).

Residues 1–182 lie on the Cytoplasmic side of the membrane; that stretch reads MVFGEFFHRP…IRMENPAYCL (182 aa). A helical transmembrane segment spans residues 183-204; that stretch reads SAKLIAISSLSVVLASIVAMCV. Residues 205 to 220 lie on the Extracellular side of the membrane; the sequence is HSMSEFQNEDGEVDDP. The chain crosses the membrane as a helical span at residues 221–243; it reads VLEGVEIACIAWFTGELAVRLVA. Over 244-254 the chain is Cytoplasmic; the sequence is APCQKKFWKNP. A helical membrane pass occupies residues 255-275; sequence LNIIDFVSIIPFYATLAVDTK. Residues 276–285 lie on the Extracellular side of the membrane; the sequence is EEESEDIENM. Residues 286–306 form a helical; Voltage-sensor membrane-spanning segment; sequence GKVVQILRLMRIFRILKLARH. The Cytoplasmic segment spans residues 307–321; it reads SVGLRSLGATLRHSY. A helical membrane pass occupies residues 322 to 343; that stretch reads HEVGLLLLFLSVGISIFSVLIY. At 344-357 the chain is on the extracellular side; sequence SVEKDDHTSSLTSI. Residues 358-369 constitute an intramembrane region (helical); sequence PICWWWATISMT. A Selectivity filter motif is present at residues 370–375; that stretch reads TVGYGD. Residues 370–377 lie within the membrane without spanning it; sequence TVGYGDTH. The Extracellular segment spans residues 378 to 384; it reads PVTLAGK. The chain crosses the membrane as a helical span at residues 385-413; the sequence is LIASTCIICGILVVALPITIIFNKFSKYY. Residues 414–491 are Cytoplasmic-facing; the sequence is QKQKDIDVDQ…TASLENCTAK (78 aa).

Belongs to the potassium channel family. S (TC 1.A.1.2) subfamily. Kv9.3/KCNS3 sub-subfamily. Heterotetramer with KCNB1. Does not form homomultimers.

Its subcellular location is the cell membrane. Its function is as follows. Potassium channel regulatory subunit that modulates the delayed rectifier potassium channel activity of KCNB1 by namely slowing down the deactivation and inactivation time constants. While it does not form functional channel on its own, it can form functional heterotetrameric channels with KCNB1. In Oryctolagus cuniculus (Rabbit), this protein is Delayed-rectifier potassium channel regulatory subunit KCNS3.